Here is a 638-residue protein sequence, read N- to C-terminus: Homeobox protein 10 (638 aa).

Disordered stretches follow at residues 23 to 55 (ETQPTTPTTQPTTPTTNTISTTTNTITSTLNTN), 76 to 139 (TDEN…VNTN), and 195 to 219 (IANEDKESLPEPQTNSNVNGNEEAK). 2 stretches are compositionally biased toward low complexity: residues 24–55 (TQPTTPTTQPTTPTTNTISTTTNTITSTLNTN) and 80–139 (NTSV…VNTN). The segment covering 205–214 (EPQTNSNVNG) has biased composition (polar residues). Positions 301–360 (NKKKRQRTSPEQLAILEQIFETDKMPSQQIRVRLANQLGMSSRRVQIWFQNKRAKVKRGG) form a DNA-binding region, homeobox. Disordered regions lie at residues 381-431 (EDED…TSSD) and 448-638 (SSSS…IVKN). Composition is skewed to low complexity over residues 388–411 (SLTIDESGNNNNNSGNNNNNNNNG), 419–430 (LSSSPTNLNTSS), and 462–501 (NNTNNNNNNNNNNNNNNNNNNNNNNNHTTTTTTTTTTTTT). 2 stretches are compositionally biased toward polar residues: residues 502-522 (SSSPPLTSFNFQLNQSLNKLT) and 545-573 (SLNSTASSLPSFPQIKLNSSSKHIPTDKQ). Residues 575–625 (NSDFSNFNNNNNNNNNNNNNNNNNNNINNNGNNNSNNNDSNNNNNKSNFSD) are compositionally biased toward low complexity.

The protein resides in the nucleus. Its function is as follows. Putative transcription factor. The polypeptide is Homeobox protein 10 (hbx10) (Dictyostelium discoideum (Social amoeba)).